The primary structure comprises 467 residues: Chromosomal replication initiator protein DnaA (467 aa).

Residues 1 to 90 are domain I, interacts with DnaA modulators; sequence MSLSLWQQCL…KPVTQTPQAA (90 aa). The tract at residues 91–130 is domain II; the sequence is VTSNVAAPAQVAQTQPQRAAPSTRSGWDNVPAPAEPTYRS. Residues 98 to 111 are compositionally biased toward low complexity; the sequence is PAQVAQTQPQRAAP. Positions 98–119 are disordered; it reads PAQVAQTQPQRAAPSTRSGWDN. The tract at residues 131–347 is domain III, AAA+ region; that stretch reads NVNVKHTFDN…GALNRVIANA (217 aa). ATP is bound by residues glycine 175, glycine 177, lysine 178, and threonine 179. A domain IV, binds dsDNA region spans residues 348–467; it reads NFTGRAITID…FSNLIRTLSS (120 aa).

Belongs to the DnaA family. In terms of assembly, oligomerizes as a right-handed, spiral filament on DNA at oriC.

The protein localises to the cytoplasm. Its function is as follows. Plays an essential role in the initiation and regulation of chromosomal replication. ATP-DnaA binds to the origin of replication (oriC) to initiate formation of the DNA replication initiation complex once per cell cycle. Binds the DnaA box (a 9 base pair repeat at the origin) and separates the double-stranded (ds)DNA. Forms a right-handed helical filament on oriC DNA; dsDNA binds to the exterior of the filament while single-stranded (ss)DNA is stabiized in the filament's interior. The ATP-DnaA-oriC complex binds and stabilizes one strand of the AT-rich DNA unwinding element (DUE), permitting loading of DNA polymerase. After initiation quickly degrades to an ADP-DnaA complex that is not apt for DNA replication. Binds acidic phospholipids. This Shigella sonnei (strain Ss046) protein is Chromosomal replication initiator protein DnaA.